Here is a 290-residue protein sequence, read N- to C-terminus: Transcription factor HES-1 (290 aa).

The tract at residues 1 to 47 is disordered; the sequence is MPADTGMEKPTASPIAGAPASASHTPDKPRSASEHRKSSKPIMEKRR. A compositionally biased stretch (low complexity) spans 10–23; sequence PTASPIAGAPASAS. Residues 25 to 36 show a composition bias toward basic and acidic residues; it reads TPDKPRSASEHR. Positions 35-92 constitute a bHLH domain; that stretch reads HRKSSKPIMEKRRRARINESLGQLKMLILDALKKDSSRHSKLEKADILEMTVKHLRNL. The 34-residue stretch at 111–144 folds into the Orange domain; that stretch reads YRAGFNECMNEVTRFLSTCEGVNADVRARLLGHL. A WRPW motif motif is present at residues 287–290; that stretch reads WRPW.

Transcription repression requires formation of a complex with a corepressor protein of the Groucho/TLE family.

It localises to the nucleus. Transcriptional repressor of genes that require a bHLH protein for their transcription. May act as a negative regulator of myogenesis by inhibiting the functions of MYOD1 and ASH1. This chain is Transcription factor HES-1 (HES1), found in Gallus gallus (Chicken).